The primary structure comprises 204 residues: Probable nicotinate-nucleotide adenylyltransferase (204 aa).

Belongs to the NadD family.

The catalysed reaction is nicotinate beta-D-ribonucleotide + ATP + H(+) = deamido-NAD(+) + diphosphate. Its pathway is cofactor biosynthesis; NAD(+) biosynthesis; deamido-NAD(+) from nicotinate D-ribonucleotide: step 1/1. In terms of biological role, catalyzes the reversible adenylation of nicotinate mononucleotide (NaMN) to nicotinic acid adenine dinucleotide (NaAD). The polypeptide is Probable nicotinate-nucleotide adenylyltransferase (Methylacidiphilum infernorum (isolate V4) (Methylokorus infernorum (strain V4))).